Reading from the N-terminus, the 205-residue chain is High frequency lysogenization protein HflD homolog (205 aa).

This sequence belongs to the HflD family.

It localises to the cytoplasm. Its subcellular location is the cell inner membrane. The sequence is that of High frequency lysogenization protein HflD homolog from Shewanella sp. (strain W3-18-1).